The primary structure comprises 528 residues: Transcriptional activator protein UGA3 (528 aa).

Residues 17–44 (CITCKIRKKRCSEDKPVCRDCRRLSFPC) constitute a DNA-binding region (zn(2)-C6 fungal-type). Positions 55 to 62 (SLKKIKAD) match the Nuclear localization signal motif.

In terms of assembly, UGA3 proteins associate in oligomers, at least in the presence of inducer.

The protein localises to the nucleus. In terms of biological role, GABA-dependent positive regulation of genes required for catabolism of GABA (UGA4, UGA1, and UGA2). This is Transcriptional activator protein UGA3 (UGA3) from Saccharomyces cerevisiae (strain ATCC 204508 / S288c) (Baker's yeast).